A 198-amino-acid chain; its full sequence is Protein hunchback (198 aa).

2 disordered regions span residues 16-111 and 152-198; these read SHHH…LPGL and NDKL…KYMA. Residues 17 to 31 are compositionally biased toward basic residues; sequence HHHHHHHAHHSHHQH. Composition is skewed to low complexity over residues 35 to 46 and 56 to 83; these read SNSNSNASSPHQ and SNTN…QQQQ. Residues 95–105 are compositionally biased toward polar residues; sequence PSPSNNDQNSP. A compositionally biased stretch (basic and acidic residues) spans 179–198; the sequence is EPEKEHDLMSNSSEDMKYMA.

It belongs to the hunchback C2H2-type zinc-finger protein family.

It localises to the nucleus. In terms of biological role, gap class segmentation protein that controls development of head structures. The polypeptide is Protein hunchback (hb) (Drosophila lineosetae (Fruit fly)).